The chain runs to 876 residues: Alanine--tRNA ligase (876 aa).

The residue at position 74 (K74) is an N6-acetyllysine. Zn(2+) is bound by residues H564, H568, C666, and H670.

Belongs to the class-II aminoacyl-tRNA synthetase family. Homotetramer. Zn(2+) serves as cofactor.

It localises to the cytoplasm. It carries out the reaction tRNA(Ala) + L-alanine + ATP = L-alanyl-tRNA(Ala) + AMP + diphosphate. Catalyzes the attachment of alanine to tRNA(Ala) in a two-step reaction: alanine is first activated by ATP to form Ala-AMP and then transferred to the acceptor end of tRNA(Ala). Also edits incorrectly charged Ser-tRNA(Ala) and Gly-tRNA(Ala) via its editing domain. The polypeptide is Alanine--tRNA ligase (Shigella boydii serotype 18 (strain CDC 3083-94 / BS512)).